The following is a 545-amino-acid chain: Chaperonin GroEL (545 aa).

ATP is bound by residues 29–32 (TLGP), 86–90 (DGTTT), G413, 476–478 (NAA), and D492.

This sequence belongs to the chaperonin (HSP60) family. As to quaternary structure, forms a cylinder of 14 subunits composed of two heptameric rings stacked back-to-back. Interacts with the co-chaperonin GroES.

Its subcellular location is the cytoplasm. The catalysed reaction is ATP + H2O + a folded polypeptide = ADP + phosphate + an unfolded polypeptide.. Functionally, together with its co-chaperonin GroES, plays an essential role in assisting protein folding. The GroEL-GroES system forms a nano-cage that allows encapsulation of the non-native substrate proteins and provides a physical environment optimized to promote and accelerate protein folding. The protein is Chaperonin GroEL of Oceanobacillus iheyensis (strain DSM 14371 / CIP 107618 / JCM 11309 / KCTC 3954 / HTE831).